The chain runs to 342 residues: Phosphate acyltransferase (342 aa).

The protein belongs to the PlsX family. In terms of assembly, homodimer. Probably interacts with PlsY.

It is found in the cytoplasm. The enzyme catalyses a fatty acyl-[ACP] + phosphate = an acyl phosphate + holo-[ACP]. Its pathway is lipid metabolism; phospholipid metabolism. Functionally, catalyzes the reversible formation of acyl-phosphate (acyl-PO(4)) from acyl-[acyl-carrier-protein] (acyl-ACP). This enzyme utilizes acyl-ACP as fatty acyl donor, but not acyl-CoA. This Shewanella sp. (strain ANA-3) protein is Phosphate acyltransferase.